The following is a 112-amino-acid chain: MKSKVSPSFHFFIFFFLFCLLRTLDYNTYNTNHNDTYMHIKLFFSYYFRFVHLFFFLYYAHLRTTKHYHTLLIQYYPFEMHWSKDLAQRPSSLRLRYFPAYLKRCCYHPMQN.

The next 2 helical transmembrane spans lie at Pro7–Tyr26 and Thr36–Tyr58.

It is found in the membrane. This is an uncharacterized protein from Saccharomyces cerevisiae (strain ATCC 204508 / S288c) (Baker's yeast).